The sequence spans 256 residues: Protein Ta0487 (256 aa).

The protein belongs to the CinA family.

In Thermoplasma acidophilum (strain ATCC 25905 / DSM 1728 / JCM 9062 / NBRC 15155 / AMRC-C165), this protein is Protein Ta0487.